The chain runs to 175 residues: Regenerating islet-derived protein 3-beta (175 aa).

A signal peptide spans 1–26 (MLPPTACSVMSWMLLSCLMLLSQVQG). Positions 27-37 (EDSLKNIPSAR) are excised as a propeptide. 3 cysteine pairs are disulfide-bonded: Cys-40–Cys-51, Cys-68–Cys-171, and Cys-146–Cys-163. The region spanning 47–172 (YGSYCYALFQ…CEVKLPYVCK (126 aa)) is the C-type lectin domain. His-107 is a Zn(2+) binding site. Residues 114–116 (EPN) carry the EPN motif. A Zn(2+)-binding site is contributed by Glu-121.

Forms a hexameric membrane-permeabilizing oligomeric pore on membrane phospholipids. The hexamer is formed by three dimers related by helical symmetry. Forms filaments, filamentation traps pore complexes and limits damage to host cells. Interacts with EXTL3. Post-translationally, proteolytic processing by trypsin removes an inhibitory N-terminal propeptide and is essential for peptidoglycan binding and antibacterial activity. In terms of tissue distribution, constitutively expressed in the small intestine, moderately in colon and at an extremely low level in healthy pancreas.

Its subcellular location is the secreted. Lipopolysaccharide inhibits pore-forming activity, explaining why is bactericidal for Gram-positive but not Gram-negative bacteria. Bactericidal C-type lectin which acts against several intestinal Gram-positive and Gram-negative bacteria. Lacks antibacterial activity against S.typhimurium. May play a role in protection against infection with S.enteritidis by inhibiting its translocation from the gut lumen into intestinal tissues and further extraintestinal tissues. In terms of biological role, acts as a hormone in response to different stimuli. Secreted by different cell types to activate its receptor EXTL3 and induce cell specific signaling pathways. In pancreas, is able stimulate cell proliferation. The chain is Regenerating islet-derived protein 3-beta from Mus musculus (Mouse).